The primary structure comprises 754 residues: 5-methyltetrahydropteroyltriglutamate--homocysteine methyltransferase (754 aa).

Residues Arg17–Lys20 and Lys117 contribute to the 5-methyltetrahydropteroyltri-L-glutamate site. L-homocysteine contacts are provided by residues Ile431–Ser433 and Glu484. Residues Ile431–Ser433 and Glu484 each bind L-methionine. 5-methyltetrahydropteroyltri-L-glutamate is bound by residues Arg515–Cys516 and Trp561. L-homocysteine is bound at residue Asp599. L-methionine is bound at residue Asp599. Residue Glu605 participates in 5-methyltetrahydropteroyltri-L-glutamate binding. Residues His641, Cys643, and Glu665 each contribute to the Zn(2+) site. His694 acts as the Proton donor in catalysis. Cys726 is a Zn(2+) binding site.

This sequence belongs to the vitamin-B12 independent methionine synthase family. Zn(2+) is required as a cofactor.

It catalyses the reaction 5-methyltetrahydropteroyltri-L-glutamate + L-homocysteine = tetrahydropteroyltri-L-glutamate + L-methionine. It participates in amino-acid biosynthesis; L-methionine biosynthesis via de novo pathway; L-methionine from L-homocysteine (MetE route): step 1/1. Functionally, catalyzes the transfer of a methyl group from 5-methyltetrahydrofolate to homocysteine resulting in methionine formation. The protein is 5-methyltetrahydropteroyltriglutamate--homocysteine methyltransferase of Salmonella enteritidis PT4 (strain P125109).